The sequence spans 572 residues: Phosphoenolpyruvate-protein phosphotransferase (572 aa).

His-190 (tele-phosphohistidine intermediate) is an active-site residue. The phosphoenolpyruvate site is built by Arg-297 and Arg-333. Mg(2+) is bound by residues Glu-432 and Asp-456. Phosphoenolpyruvate-binding positions include Asn-455–Asp-456 and Arg-466. Cys-503 (proton donor) is an active-site residue.

Belongs to the PEP-utilizing enzyme family. In terms of assembly, homodimer. Mg(2+) serves as cofactor.

Its subcellular location is the cytoplasm. The enzyme catalyses L-histidyl-[protein] + phosphoenolpyruvate = N(pros)-phospho-L-histidyl-[protein] + pyruvate. In terms of biological role, general (non sugar-specific) component of the phosphoenolpyruvate-dependent sugar phosphotransferase system (sugar PTS). This major carbohydrate active-transport system catalyzes the phosphorylation of incoming sugar substrates concomitantly with their translocation across the cell membrane. Enzyme I transfers the phosphoryl group from phosphoenolpyruvate (PEP) to the phosphoryl carrier protein (HPr). The sequence is that of Phosphoenolpyruvate-protein phosphotransferase (ptsI) from Listeria innocua serovar 6a (strain ATCC BAA-680 / CLIP 11262).